Consider the following 404-residue polypeptide: Protein L-Myc-1b (404 aa).

2 disordered regions span residues 175–195 (KKQV…EEID) and 238–331 (QQHN…FLER). A compositionally biased stretch (polar residues) spans 287–315 (VPAQSPTVSASPTHTSYHLKSQPSSPQSS). Positions 321–373 (DKRKTHNFLERKRRNDLRSRFLALRDEIPGLVDCPKTPKVVILTKATEYLRTL) constitute a bHLH domain. The tract at residues 373–401 (LHVSDRQKAQEKKQLKSKQQQLLRRLAEL) is leucine-zipper.

In terms of assembly, efficient DNA binding requires dimerization with another bHLH protein. Binds DNA as a heterodimer with max.

The protein localises to the nucleus. This Danio rerio (Zebrafish) protein is Protein L-Myc-1b.